A 232-amino-acid chain; its full sequence is Enolase-phosphatase E1 (232 aa).

This sequence belongs to the HAD-like hydrolase superfamily. MasA/MtnC family. Monomer. Mg(2+) serves as cofactor.

The enzyme catalyses 5-methylsulfanyl-2,3-dioxopentyl phosphate + H2O = 1,2-dihydroxy-5-(methylsulfanyl)pent-1-en-3-one + phosphate. It functions in the pathway amino-acid biosynthesis; L-methionine biosynthesis via salvage pathway; L-methionine from S-methyl-5-thio-alpha-D-ribose 1-phosphate: step 3/6. Its pathway is amino-acid biosynthesis; L-methionine biosynthesis via salvage pathway; L-methionine from S-methyl-5-thio-alpha-D-ribose 1-phosphate: step 4/6. Bifunctional enzyme that catalyzes the enolization of 2,3-diketo-5-methylthiopentyl-1-phosphate (DK-MTP-1-P) into the intermediate 2-hydroxy-3-keto-5-methylthiopentenyl-1-phosphate (HK-MTPenyl-1-P), which is then dephosphorylated to form the acireductone 1,2-dihydroxy-3-keto-5-methylthiopentene (DHK-MTPene). The chain is Enolase-phosphatase E1 from Xanthomonas axonopodis pv. citri (strain 306).